Here is a 276-residue protein sequence, read N- to C-terminus: Ribosomal RNA small subunit methyltransferase A (276 aa).

S-adenosyl-L-methionine-binding residues include asparagine 16, leucine 18, glycine 43, glutamate 64, aspartate 89, and asparagine 109.

This sequence belongs to the class I-like SAM-binding methyltransferase superfamily. rRNA adenine N(6)-methyltransferase family. RsmA subfamily.

The protein localises to the cytoplasm. It carries out the reaction adenosine(1518)/adenosine(1519) in 16S rRNA + 4 S-adenosyl-L-methionine = N(6)-dimethyladenosine(1518)/N(6)-dimethyladenosine(1519) in 16S rRNA + 4 S-adenosyl-L-homocysteine + 4 H(+). Specifically dimethylates two adjacent adenosines (A1518 and A1519) in the loop of a conserved hairpin near the 3'-end of 16S rRNA in the 30S particle. May play a critical role in biogenesis of 30S subunits. The protein is Ribosomal RNA small subunit methyltransferase A of Marinobacter nauticus (strain ATCC 700491 / DSM 11845 / VT8) (Marinobacter aquaeolei).